The primary structure comprises 528 residues: Propionate catabolism operon regulatory protein (528 aa).

Residues 218–461 (MLGQSPQMEQ…RNMMERLALF (244 aa)) form the Sigma-54 factor interaction domain. 318–327 (AHGGTLFLDE) is an ATP binding site. A DNA-binding region (H-T-H motif) is located at residues 508–527 (KTAAANYLGISRTTFWRRLK).

In terms of biological role, involved in the transcriptional regulation of the propionate catabolism operon. The sequence is that of Propionate catabolism operon regulatory protein (prpR) from Escherichia coli (strain K12).